A 295-amino-acid polypeptide reads, in one-letter code: Glycine N-acyltransferase (295 aa).

Residues Lys-15, Lys-126, and Lys-140 each carry the N6-acetyllysine; alternate modification. 3 positions are modified to N6-succinyllysine; alternate: Lys-15, Lys-126, and Lys-140. An N6-acetyllysine modification is found at Lys-158. Lys-168 bears the N6-succinyllysine mark. An N6-acetyllysine; alternate modification is found at Lys-255. An N6-succinyllysine; alternate modification is found at Lys-255.

It belongs to the glycine N-acyltransferase family. Detected in liver (at protein level).

The protein resides in the mitochondrion. The catalysed reaction is an acyl-CoA + glycine = an N-acylglycine + CoA + H(+). It catalyses the reaction benzoyl-CoA + glycine = N-benzoylglycine + CoA + H(+). In terms of biological role, mitochondrial acyltransferase which transfers an acyl group to the N-terminus of glycine and glutamine, although much less efficiently. Can conjugate a multitude of substrates to form a variety of N-acylglycines, thereby detoxify xenobiotics, such as benzoic acid or salicylic acid, and endogenous organic acids, such as isovaleric acid. The sequence is that of Glycine N-acyltransferase (GLYAT) from Bos taurus (Bovine).